A 165-amino-acid chain; its full sequence is MPLNREDKQAVVAEVAAQVAKAQTVVLAEYRGIAVGDLTTLRAKAREQKVYLRVLKNTLARRAVEGTPFAPLAEQMTGPLIYGISEDAIAAAKVVNDFSKSNDKLVIKAGSYDGKVMDKAGVQALASIPSREELLSKLLFVMQAPVSGFARALAALAEKKQAEAA.

It belongs to the universal ribosomal protein uL10 family. As to quaternary structure, part of the ribosomal stalk of the 50S ribosomal subunit. The N-terminus interacts with L11 and the large rRNA to form the base of the stalk. The C-terminus forms an elongated spine to which L12 dimers bind in a sequential fashion forming a multimeric L10(L12)X complex.

Functionally, forms part of the ribosomal stalk, playing a central role in the interaction of the ribosome with GTP-bound translation factors. The protein is Large ribosomal subunit protein uL10 of Burkholderia thailandensis (strain ATCC 700388 / DSM 13276 / CCUG 48851 / CIP 106301 / E264).